The chain runs to 346 residues: tRNA N6-adenosine threonylcarbamoyltransferase (346 aa).

Residues histidine 109, histidine 113, and tyrosine 135 each coordinate Fe cation. Residues 135 to 139 (YVSGG), aspartate 167, glycine 180, glutamate 184, and asparagine 263 each bind substrate. Aspartate 291 is a Fe cation binding site.

The protein belongs to the KAE1 / TsaD family. As to quaternary structure, monomer. Component of the KEOPS complex that consists of Kae1, Bud32, Cgi121 and Pcc1; the whole complex dimerizes. Requires Fe(2+) as cofactor.

Its subcellular location is the cytoplasm. The catalysed reaction is L-threonylcarbamoyladenylate + adenosine(37) in tRNA = N(6)-L-threonylcarbamoyladenosine(37) in tRNA + AMP + H(+). Its function is as follows. Required for the formation of a threonylcarbamoyl group on adenosine at position 37 (t(6)A37) in tRNAs that read codons beginning with adenine. Is a component of the KEOPS complex that is probably involved in the transfer of the threonylcarbamoyl moiety of threonylcarbamoyl-AMP (TC-AMP) to the N6 group of A37. Kae1 likely plays a direct catalytic role in this reaction, but requires other protein(s) of the complex to fulfill this activity. The chain is tRNA N6-adenosine threonylcarbamoyltransferase from Methanopyrus kandleri (strain AV19 / DSM 6324 / JCM 9639 / NBRC 100938).